The primary structure comprises 155 residues: RNA pyrophosphohydrolase (155 aa).

One can recognise a Nudix hydrolase domain in the interval 5 to 147 (KYRPNVAAII…KRQVYRQVIA (143 aa)). The Nudix box signature appears at 42-63 (GGIDEGETPLEALHRELLEEIG).

The protein belongs to the Nudix hydrolase family. RppH subfamily. A divalent metal cation is required as a cofactor.

Functionally, accelerates the degradation of transcripts by removing pyrophosphate from the 5'-end of triphosphorylated RNA, leading to a more labile monophosphorylated state that can stimulate subsequent ribonuclease cleavage. The polypeptide is RNA pyrophosphohydrolase (Helicobacter pylori (strain G27)).